A 405-amino-acid polypeptide reads, in one-letter code: NADH-quinone oxidoreductase subunit D (405 aa).

This sequence belongs to the complex I 49 kDa subunit family. In terms of assembly, NDH-1 is composed of 14 different subunits. Subunits NuoB, C, D, E, F, and G constitute the peripheral sector of the complex.

Its subcellular location is the cell inner membrane. The enzyme catalyses a quinone + NADH + 5 H(+)(in) = a quinol + NAD(+) + 4 H(+)(out). Its function is as follows. NDH-1 shuttles electrons from NADH, via FMN and iron-sulfur (Fe-S) centers, to quinones in the respiratory chain. The immediate electron acceptor for the enzyme in this species is believed to be ubiquinone. Couples the redox reaction to proton translocation (for every two electrons transferred, four hydrogen ions are translocated across the cytoplasmic membrane), and thus conserves the redox energy in a proton gradient. The polypeptide is NADH-quinone oxidoreductase subunit D (Ruegeria pomeroyi (strain ATCC 700808 / DSM 15171 / DSS-3) (Silicibacter pomeroyi)).